The chain runs to 139 residues: Ribulose bisphosphate carboxylase small subunit, chromosomal (139 aa).

Belongs to the RuBisCO small chain family. In terms of assembly, heterohexadecamer of 8 large and 8 small subunits.

In terms of biological role, ruBisCO catalyzes two reactions: the carboxylation of D-ribulose 1,5-bisphosphate, the primary event in carbon dioxide fixation, as well as the oxidative fragmentation of the pentose substrate. Both reactions occur simultaneously and in competition at the same active site. Although the small subunit is not catalytic it is essential for maximal activity. The polypeptide is Ribulose bisphosphate carboxylase small subunit, chromosomal (Cupriavidus necator (Alcaligenes eutrophus)).